Consider the following 209-residue polypeptide: Lipopolysaccharide export system protein LptC (209 aa).

A helical membrane pass occupies residues 7–26 (NIRWNVILGVIALCALAWFY).

The protein belongs to the LptC family. As to quaternary structure, component of the lipopolysaccharide transport and assembly complex. Interacts with LptA and the LptBFG transporter complex.

Its subcellular location is the cell inner membrane. Functionally, involved in the assembly of lipopolysaccharide (LPS). Required for the translocation of LPS from the inner membrane to the outer membrane. Facilitates the transfer of LPS from the inner membrane to the periplasmic protein LptA. Could be a docking site for LptA. This chain is Lipopolysaccharide export system protein LptC, found in Haemophilus influenzae (strain ATCC 51907 / DSM 11121 / KW20 / Rd).